Reading from the N-terminus, the 1004-residue chain is Zinc finger protein 316 (1004 aa).

A disordered region spans residues 1–148 (MAALHTTPDS…EEEEDEDEDD (148 aa)). Alanine 2 carries the post-translational modification N-acetylalanine. Threonine 7 is modified (phosphothreonine). Serine 10 is modified (phosphoserine). The segment covering 21–60 (GSECDPDQEEEEEEEEKGEEVQEVEEEEEEIVVEEEEEGV) has biased composition (acidic residues). The span at 61 to 72 (AEVVQDAQVEAV) shows a compositional bias: low complexity. Positions 73–95 (AEVEVEADVEEEDVKEVLAEEEC) are enriched in acidic residues. Phosphoserine is present on serine 112. The span at 132-148 (EDLEEEEEEEEDEDEDD) shows a compositional bias: acidic residues. The KRAB domain occupies 158–229 (VTFEDVAVYF…DSPRPEEGDI (72 aa)). C2H2-type zinc fingers lie at residues 345–367 (TTCD…QRYH), 373–395 (FGCE…QRTH), 401–423 (FPCP…RRIH), 429–451 (YRCA…QRTH), and 457–479 (YPCS…QAVH). Residues 485–512 (HCCPDCGQAFRLRADFQRHRRGGGCAEA) form a C2H2-type 6; degenerate zinc finger. The tract at residues 508-574 (GCAEAGGDGP…TPSGKVDPAP (67 aa)) is disordered. The span at 531–557 (EDTDPGPEGSEVGEADGEAEAAAEERE) shows a compositional bias: acidic residues. C2H2-type zinc fingers lie at residues 691 to 713 (WICS…QRYH), 719 to 741 (HRCA…RRTH), 747 to 769 (FPCP…VRGH), 775 to 797 (FVCG…GRAH), and 803 to 825 (YACG…QWAH). A Glycyl lysine isopeptide (Lys-Gly) (interchain with G-Cter in SUMO2) cross-link involves residue lysine 829. 4 consecutive C2H2-type zinc fingers follow at residues 831–853 (HRCP…RRTH), 859–881 (FRCA…RRGH), 887–909 (FPCP…QRTH), and 915–937 (YACA…MKTH). The interval 936 to 976 (THRGATAAPGSGSAPAPAPKPEAAAKGPSSAGPGERGSALL) is disordered. Residues 939–968 (GATAAPGSGSAPAPAPKPEAAAKGPSSAGP) show a composition bias toward low complexity. Lysine 955 participates in a covalent cross-link: Glycyl lysine isopeptide (Lys-Gly) (interchain with G-Cter in SUMO2).

Belongs to the krueppel C2H2-type zinc-finger protein family.

It localises to the nucleus. May be involved in transcriptional regulation. This chain is Zinc finger protein 316 (ZNF316), found in Homo sapiens (Human).